The sequence spans 116 residues: Large ribosomal subunit protein bL19 (116 aa).

Belongs to the bacterial ribosomal protein bL19 family.

Its function is as follows. This protein is located at the 30S-50S ribosomal subunit interface and may play a role in the structure and function of the aminoacyl-tRNA binding site. This Pseudothermotoga lettingae (strain ATCC BAA-301 / DSM 14385 / NBRC 107922 / TMO) (Thermotoga lettingae) protein is Large ribosomal subunit protein bL19.